A 235-amino-acid polypeptide reads, in one-letter code: Centromere protein H (235 aa).

The tract at residues 1 to 23 (MAGRLSESVGSGPGAEAETAADP) is disordered. A coiled-coil region spans residues 125–145 (EIIQAHQQARVIRENLNDIRR).

It belongs to the CENP-H/MCM16 family. As to quaternary structure, component of the CENPA-HI complex, at least composed of CENPH, CENPI, CENPK, CENPL, CENPM, CENPO and CENPP. Interacts with NDC80.

The protein resides in the nucleus. It localises to the chromosome. It is found in the centromere. Its subcellular location is the kinetochore. In terms of biological role, component of the CENPA-HI complex, a centromeric complex involved in assembly of kinetochore proteins, mitotic progression and chromosome segregation. Required for the localization of CENPC but not CENPA to the centromere. It however may be involved in incorporation of newly synthesized CENPA into centromeres via its interaction with the CENPA-NAC complex. This is Centromere protein H (CENPH) from Gallus gallus (Chicken).